A 172-amino-acid chain; its full sequence is 3-hydroxydecanoyl-[acyl-carrier-protein] dehydratase (172 aa).

The active site involves His-71.

Belongs to the thioester dehydratase family. FabA subfamily. As to quaternary structure, homodimer.

The protein resides in the cytoplasm. It catalyses the reaction a (3R)-hydroxyacyl-[ACP] = a (2E)-enoyl-[ACP] + H2O. It carries out the reaction (3R)-hydroxydecanoyl-[ACP] = (2E)-decenoyl-[ACP] + H2O. The catalysed reaction is (2E)-decenoyl-[ACP] = (3Z)-decenoyl-[ACP]. It participates in lipid metabolism; fatty acid biosynthesis. Its function is as follows. Necessary for the introduction of cis unsaturation into fatty acids. Catalyzes the dehydration of (3R)-3-hydroxydecanoyl-ACP to E-(2)-decenoyl-ACP and then its isomerization to Z-(3)-decenoyl-ACP. Can catalyze the dehydratase reaction for beta-hydroxyacyl-ACPs with saturated chain lengths up to 16:0, being most active on intermediate chain length. The chain is 3-hydroxydecanoyl-[acyl-carrier-protein] dehydratase from Yersinia pseudotuberculosis serotype O:1b (strain IP 31758).